The primary structure comprises 120 residues: Ribonuclease P protein component 4 (120 aa).

Cys-68, Cys-71, Cys-97, and Cys-100 together coordinate Zn(2+).

Belongs to the eukaryotic/archaeal RNase P protein component 4 family. In terms of assembly, consists of a catalytic RNA component and at least 5 protein subunits. Forms a heterodimeric subcomplex with Rnp1. Reconstituted enzyme missing individual protein subunits is suboptimally active, showing each subunit contributes to optimization of activity. Zn(2+) is required as a cofactor.

The protein resides in the cytoplasm. It catalyses the reaction Endonucleolytic cleavage of RNA, removing 5'-extranucleotides from tRNA precursor.. Part of ribonuclease P, a protein complex that generates mature tRNA molecules by cleaving their 5'-ends. Binds RNase P RNA. In Pyrococcus horikoshii (strain ATCC 700860 / DSM 12428 / JCM 9974 / NBRC 100139 / OT-3), this protein is Ribonuclease P protein component 4.